The sequence spans 143 residues: Photosystem II extrinsic protein U (143 aa).

A signal peptide spans 1–29; it reads MKRLVGVLMILGLMLTSWGLLGSPQTAIA. The propeptide occupies 30–44; the sequence is ASLSPLSFNPSPVLA.

Belongs to the PsbU family. PSII is composed of 1 copy each of membrane proteins PsbA, PsbB, PsbC, PsbD, PsbE, PsbF, PsbH, PsbI, PsbJ, PsbK, PsbL, PsbM, PsbT, PsbX, PsbY, PsbZ, Psb30/Ycf12, peripheral proteins PsbO, CyanoQ (PsbQ), PsbU, PsbV and a large number of cofactors. It forms dimeric complexes.

The protein resides in the cellular thylakoid membrane. One of the extrinsic, lumenal subunits of photosystem II (PSII). PSII is a light-driven water plastoquinone oxidoreductase, using light energy to abstract electrons from H(2)O, generating a proton gradient subsequently used for ATP formation. The extrinsic proteins stabilize the structure of photosystem II oxygen-evolving complex (OEC), the ion environment of oxygen evolution and protect the OEC against heat-induced inactivation. The polypeptide is Photosystem II extrinsic protein U (Leptolyngbya laminosa (Phormidium laminosum)).